We begin with the raw amino-acid sequence, 163 residues long: Large ribosomal subunit protein uL10 (163 aa).

It belongs to the universal ribosomal protein uL10 family. Part of the ribosomal stalk of the 50S ribosomal subunit. The N-terminus interacts with L11 and the large rRNA to form the base of the stalk. The C-terminus forms an elongated spine to which L12 dimers bind in a sequential fashion forming a multimeric L10(L12)X complex.

In terms of biological role, forms part of the ribosomal stalk, playing a central role in the interaction of the ribosome with GTP-bound translation factors. The chain is Large ribosomal subunit protein uL10 (rplJ) from Haemophilus influenzae (strain ATCC 51907 / DSM 11121 / KW20 / Rd).